A 143-amino-acid chain; its full sequence is Small ribosomal subunit protein uS12 (143 aa).

The segment covering 1 to 20 (MGKPRGLRTARKLKNHRREQ) has biased composition (basic residues). Positions 1–28 (MGKPRGLRTARKLKNHRREQRWHDKDYK) are disordered. At proline 62 the chain carries Hydroxyproline.

The protein belongs to the universal ribosomal protein uS12 family. In terms of assembly, component of the 40S small ribosomal subunit.

The protein resides in the cytoplasm. Its subcellular location is the cytosol. It localises to the rough endoplasmic reticulum. The chain is Small ribosomal subunit protein uS12 (RPS23) from Lumbricus rubellus (Humus earthworm).